The following is a 559-amino-acid chain: Glypican-1 (559 aa).

Positions methionine 1–glycine 23 are cleaved as a signal peptide. 7 disulfides stabilise this stretch: cysteine 32–cysteine 68, cysteine 62–cysteine 256, cysteine 69–cysteine 259, cysteine 191–cysteine 343, cysteine 246–cysteine 279, cysteine 268–cysteine 415, and cysteine 272–cysteine 401. Residues asparagine 79 and asparagine 116 are each glycosylated (N-linked (GlcNAc...) asparagine). Residues phenylalanine 478–alanine 539 form a disordered region. Residues serine 486, serine 488, and serine 490 are each glycosylated (O-linked (Xyl...) (heparan sulfate) serine). The GPI-anchor amidated serine moiety is linked to residue serine 530. Positions alanine 531–arginine 559 are cleaved as a propeptide — removed in mature form.

It belongs to the glypican family. Post-translationally, S-nitrosylated in a Cu(2+)-dependent manner. Nitric acid (NO) is released from the nitrosylated cysteines by ascorbate or by some other reducing agent, in a Cu(2+) or Zn(2+) dependent manner. This free nitric oxide is then capable of cleaving the heparan sulfate side chains. N- and O-glycosylated. N-glycosylation is mainly of the complex type containing sialic acid. O-glycosylated with heparan sulfate. The heparan sulfate chains can be cleaved either by the action of heparanase or, degraded by a deaminative process that uses nitric oxide (NO) released from the S-nitrosylated cysteines. This process is triggered by ascorbate, or by some other reducing agent, in a Cu(2+)- or Zn(2+) dependent manner. Cu(2+) ions are provided by ceruloproteins such as APP, PRNP or CP which associate with GCP1 in intracellular compartments or lipid rafts. In terms of processing, shed from the cell surface probably by further cleavage.

It is found in the cell membrane. It localises to the endosome. Its subcellular location is the secreted. The protein resides in the extracellular space. Cell surface proteoglycan that bears heparan sulfate. Binds, via the heparan sulfate side chains, alpha-4 (V) collagen and participates in Schwann cell myelination. May act as a catalyst in increasing the rate of conversion of prion protein PRPN (C) to PRNP (Sc) via associating (via the heparan sulfate side chains) with both forms of PRPN, targeting them to lipid rafts and facilitating their interaction. Required for proper skeletal muscle differentiation by sequestering FGF2 in lipid rafts preventing its binding to receptors (FGFRs) and inhibiting the FGF-mediated signaling. The sequence is that of Glypican-1 (GPC1) from Bos taurus (Bovine).